We begin with the raw amino-acid sequence, 130 residues long: Histone H2A.1 (130 aa).

The segment at 1–22 is disordered; the sequence is MSGGKGKAGSSEKASTSRSAKA. Position 2 is an N-acetylserine (serine 2). Lysine 5 and lysine 7 each carry N6-acetyllysine. At glutamine 105 the chain carries N5-methylglutamine. Serine 127 is subject to Phosphoserine. Residues 127 to 128 carry the [ST]-Q motif motif; the sequence is SQ.

It belongs to the histone H2A family. As to quaternary structure, the nucleosome is a histone octamer containing two molecules each of H2A, H2B, H3 and H4 assembled in one H3-H4 heterotetramer and two H2A-H2B heterodimers. The octamer wraps approximately 147 bp of DNA. Post-translationally, phosphorylated to form H2AS128ph (gamma-H2A) in response to DNA double-strand breaks (DSBs) generated by exogenous genotoxic agents and by stalled replication forks. Phosphorylation is dependent on the DNA damage checkpoint kinases MEC1/ATR and TEL1/ATM, spreads on either side of a detected DSB site and may mark the surrounding chromatin for recruitment of proteins required for DNA damage signaling and repair. Gamma-H2A is removed from the DNA prior to the strand invasion-primer extension step of the repair process and subsequently dephosphorylated. Dephosphorylation is necessary for efficient recovery from the DNA damage checkpoint. In terms of processing, acetylated by ESA1 to form H2AK4ac and H2AK7ac.

The protein resides in the nucleus. It localises to the chromosome. Functionally, core component of nucleosome which plays a central role in DNA double strand break (DSB) repair. Nucleosomes wrap and compact DNA into chromatin, limiting DNA accessibility to the cellular machineries which require DNA as a template. Histones thereby play a central role in transcription regulation, DNA repair, DNA replication and chromosomal stability. DNA accessibility is regulated via a complex set of post-translational modifications of histones, also called histone code, and nucleosome remodeling. This chain is Histone H2A.1 (HTA1), found in Lodderomyces elongisporus (strain ATCC 11503 / CBS 2605 / JCM 1781 / NBRC 1676 / NRRL YB-4239) (Yeast).